A 478-amino-acid chain; its full sequence is Divinyl ether synthase CYP74D2 (478 aa).

Cys-431 lines the heme pocket.

Belongs to the cytochrome P450 family. 9-divinyl ether synthase subfamily. In terms of tissue distribution, expressed in roots.

The enzyme catalyses (9S)-hydroperoxy-(10E,12Z)-octadecadienoate = colneleate + H2O. It catalyses the reaction (9S)-hydroperoxy-(10E,12Z,15Z)-octadecatrienoate = colnelenate + H2O. Involved in the biosynthesis of the anti-fungal and antibacterial toxins colneleate and colnelenate. Can use (9S)-hydroperoxy-(10E,12Z)-octadecadienoate (9-HPOD) and (9S)-hydroperoxy-(10E,12Z,15Z)-octadecatrienoate (9-HPOT) as substrates but has no activity with the corresponding 13-hydroperoxides (13-HPOD and 13-HPOT). In Solanum tuberosum (Potato), this protein is Divinyl ether synthase CYP74D2.